A 759-amino-acid polypeptide reads, in one-letter code: Catalase-peroxidase (759 aa).

Positions 1 to 24 are disordered; that stretch reads MTQDKCPFKEQSSQPNFAGGGTSN. Residues 96 to 242 constitute a cross-link (tryptophyl-tyrosyl-methioninium (Trp-Tyr) (with M-268)); sequence WHSAGTYRVF…LAAAHMGLIY (147 aa). H97 (proton acceptor) is an active-site residue. A cross-link (tryptophyl-tyrosyl-methioninium (Tyr-Met) (with W-96)) is located at residues 242–268; sequence YVNPEGPDGNPDPVAAAHDIRDTFGRM. Heme b is bound at residue H283.

It belongs to the peroxidase family. Peroxidase/catalase subfamily. Homodimer or homotetramer. Heme b serves as cofactor. In terms of processing, formation of the three residue Trp-Tyr-Met cross-link is important for the catalase, but not the peroxidase activity of the enzyme.

Its subcellular location is the cytoplasm. The enzyme catalyses H2O2 + AH2 = A + 2 H2O. It carries out the reaction 2 H2O2 = O2 + 2 H2O. In terms of biological role, bifunctional enzyme with both catalase and broad-spectrum peroxidase activity. In Aspergillus fumigatus (strain CBS 144.89 / FGSC A1163 / CEA10) (Neosartorya fumigata), this protein is Catalase-peroxidase.